Reading from the N-terminus, the 269-residue chain is Intermembrane phospholipid transport system ATP-binding protein MlaF (269 aa).

The ABC transporter domain maps to 9-245 (VDMRDVSFTR…PDPRVRQFLD (237 aa)). 41 to 48 (GPSGIGKT) provides a ligand contact to ATP.

It belongs to the ABC transporter superfamily. MlaF family. In terms of assembly, the complex is composed of two ATP-binding proteins (MlaF), two transmembrane proteins (MlaE), two cytoplasmic solute-binding proteins (MlaB) and six periplasmic solute-binding proteins (MlaD).

The protein localises to the cell inner membrane. Functionally, part of the ABC transporter complex MlaFEDB, which is involved in a phospholipid transport pathway that maintains lipid asymmetry in the outer membrane by retrograde trafficking of phospholipids from the outer membrane to the inner membrane. Responsible for energy coupling to the transport system. In Escherichia coli O157:H7, this protein is Intermembrane phospholipid transport system ATP-binding protein MlaF.